The primary structure comprises 740 residues: Vertnin (740 aa).

Disordered regions lie at residues 485-506 (EAGE…RGLI), 560-616 (PGMQ…DQNV), and 653-673 (TQSQ…APGG). A compositionally biased stretch (basic and acidic residues) spans 578-604 (QKPEGRQKPEEQQKPEGRQKPEGRQKP). Residues 653-667 (TQSQPHSGSLPSQTL) show a composition bias toward polar residues.

It belongs to the vertnin family.

Its subcellular location is the nucleus. Acts as a transcription factor that regulates development of thoracic vertebrae. The polypeptide is Vertnin (Vrtn) (Mus musculus (Mouse)).